A 1271-amino-acid polypeptide reads, in one-letter code: Zinc finger transcription factor Trps1 (1271 aa).

2 disordered regions span residues M1–S76 and S124–P155. A compositionally biased stretch (polar residues) spans S34–S49. Residues H54–E65 show a composition bias toward basic and acidic residues. Residues P66–S76 show a composition bias toward polar residues. The segment at F217–H242 adopts a C2H2-type 1; atypical zinc-finger fold. The segment at F328 to H353 adopts a C2H2-type 2; atypical zinc-finger fold. The tract at residues H353 to G387 is disordered. Residues Y426–H451 form a C2H2-type 3; atypical zinc finger. The C2H2-type 4; atypical zinc-finger motif lies at Y513 to H543. C2H2-type zinc fingers lie at residues H604–H627, H656–H679, and Y682–H705. The tract at residues G843 to R877 is disordered. The GATA-type zinc-finger motif lies at C886–C910. Disordered regions lie at residues R938–Q987, S1031–P1064, and L1154–D1196. Basic and acidic residues predominate over residues I972–E985. The span at S1031–K1049 shows a compositional bias: low complexity. 2 stretches are compositionally biased toward basic and acidic residues: residues G1050–M1062 and D1170–D1196. Positions P1153–D1271 are transcriptional repressor domain. Residues K1182 and K1191 each participate in a glycyl lysine isopeptide (Lys-Gly) (interchain with G-Cter in SUMO) cross-link. 2 C2H2-type zinc fingers span residues T1205 to H1227 and F1233 to H1257.

Binds specifically to GATA sequences. Sumoylated. Sumoylation in the repressor domain inhibits the transcription repression activity. Sumoylation on Lys-1191 is the major site. Appears to be sumoylated on multiple sites.

It localises to the nucleus. In terms of biological role, transcriptional repressor. Represses expression of GATA-regulated genes at selected sites and stages in vertebrate development. The protein is Zinc finger transcription factor Trps1 (trps1) of Xenopus laevis (African clawed frog).